A 1025-amino-acid chain; its full sequence is Putative receptor-like protein kinase At3g47110 (1025 aa).

The N-terminal stretch at 1-30 (MGVPCIVMRLILVSALLVSVSLEHSDMVCA) is a signal peptide. Residues 31 to 653 (QTIRLTEETD…LPRRHSSVRK (623 aa)) lie on the Extracellular side of the membrane. 2 N-linked (GlcNAc...) asparagine glycosylation sites follow: Asn63 and Asn103. LRR repeat units lie at residues 104-128 (LSFL…VGNL), 130-151 (RLQY…VLSN), 152-175 (CSSL…EFGS), 176-200 (LSKL…LGNL), 202-224 (SLQM…IARL), 226-248 (QMIF…IYNL), 249-271 (SSLI…DFGS), 273-297 (LPNL…LSNI), 298-323 (SSLR…RLQN), and 325-344 (LLLG…DLDF). 2 N-linked (GlcNAc...) asparagine glycosylation sites follow: Asn135 and Asn151. Asn188 and Asn199 each carry an N-linked (GlcNAc...) asparagine glycan. Asn247 carries N-linked (GlcNAc...) asparagine glycosylation. Asn296 carries N-linked (GlcNAc...) asparagine glycosylation. N-linked (GlcNAc...) asparagine glycans are attached at residues Asn331, Asn336, Asn350, and Asn374. 11 LRR repeats span residues 351–374 (CSQL…FIAN), 376–400 (STQL…IGNL), 401–424 (VSLQ…LGEL), 426–448 (ELRK…LGNI), 449–472 (SGLT…LGSC), 473–496 (SYLL…LMEL), 498–520 (SLVV…IGKL), 521–544 (KFLL…LANC), 546–567 (SLEF…IRGL), 568–593 (TGLR…NFSK), and 595–616 (QNLN…VFRN). Residues Asn447, Asn458, Asn486, and Asn503 are each glycosylated (N-linked (GlcNAc...) asparagine). N-linked (GlcNAc...) asparagine glycosylation is found at Asn579, Asn590, Asn598, and Asn616. Residues 654 to 674 (IITICVSAVMAALLLLCLCVV) traverse the membrane as a helical segment. Residues 675–1025 (YLCWYKLRVK…RESFFRDEET (351 aa)) are Cytoplasmic-facing. Phosphothreonine is present on Thr716. The Protein kinase domain maps to 719 to 1020 (FSSSNLIGSG…KLVSIRESFF (302 aa)). ATP contacts are provided by residues 725-733 (IGSGNFGAV) and Lys748. Phosphotyrosine is present on residues Tyr798 and Tyr843. The active-site Proton acceptor is Asp856. Tyr904 is subject to Phosphotyrosine.

Belongs to the protein kinase superfamily. Ser/Thr protein kinase family.

It localises to the cell membrane. The enzyme catalyses L-seryl-[protein] + ATP = O-phospho-L-seryl-[protein] + ADP + H(+). The catalysed reaction is L-threonyl-[protein] + ATP = O-phospho-L-threonyl-[protein] + ADP + H(+). In Arabidopsis thaliana (Mouse-ear cress), this protein is Putative receptor-like protein kinase At3g47110.